We begin with the raw amino-acid sequence, 282 residues long: RNA-4 uncharacterized 31.9 kDa protein (282 aa).

In Beta macrocarpa (Beet), this protein is RNA-4 uncharacterized 31.9 kDa protein.